Here is a 281-residue protein sequence, read N- to C-terminus: Ribosomal RNA small subunit methyltransferase A (281 aa).

S-adenosyl-L-methionine contacts are provided by asparagine 21, leucine 23, glycine 48, glutamate 69, aspartate 92, and asparagine 113.

The protein belongs to the class I-like SAM-binding methyltransferase superfamily. rRNA adenine N(6)-methyltransferase family. RsmA subfamily.

Its subcellular location is the cytoplasm. The catalysed reaction is adenosine(1518)/adenosine(1519) in 16S rRNA + 4 S-adenosyl-L-methionine = N(6)-dimethyladenosine(1518)/N(6)-dimethyladenosine(1519) in 16S rRNA + 4 S-adenosyl-L-homocysteine + 4 H(+). In terms of biological role, specifically dimethylates two adjacent adenosines (A1518 and A1519) in the loop of a conserved hairpin near the 3'-end of 16S rRNA in the 30S particle. May play a critical role in biogenesis of 30S subunits. The sequence is that of Ribosomal RNA small subunit methyltransferase A from Ralstonia nicotianae (strain ATCC BAA-1114 / GMI1000) (Ralstonia solanacearum).